The following is a 352-amino-acid chain: Sphingosine 1-phosphate receptor 2 (352 aa).

Over Met1–Lys34 the chain is Extracellular. Asn19 is a glycosylation site (N-linked (GlcNAc...) asparagine). Residues Val35–Ala59 traverse the membrane as a helical segment. Topologically, residues Arg60–Ser66 are cytoplasmic. Residues Ala67–His95 traverse the membrane as a helical segment. Topologically, residues Val96–Glu109 are extracellular. The chain crosses the membrane as a helical span at residues Gly110–Ile128. Over Glu129–Arg147 the chain is Cytoplasmic. Residues Met148–Leu173 form a helical membrane-spanning segment. Residues Asn174–His189 are Extracellular-facing. The chain crosses the membrane as a helical span at residues Tyr190 to Val210. Residues Arg211–Lys233 are Cytoplasmic-facing. A helical membrane pass occupies residues Thr234–Leu255. Over Asp256–His271 the chain is Extracellular. A helical membrane pass occupies residues Tyr272–Ser292. Topologically, residues Arg293 to Val352 are cytoplasmic. Cys305 is lipidated: S-palmitoyl cysteine. Residues Leu333–Val352 form a disordered region.

Belongs to the G-protein coupled receptor 1 family. As to expression, most abundant in heart and lung; low, but clearly observed in kidney, liver and thymus; much lower but detectable in brain, testis, stomach and intestine. Not significantly detected in any of the sections of embryonic day (E) 14-18, except in embryonic brain.

The protein localises to the cell membrane. Functionally, receptor for the lysosphingolipid sphingosine 1-phosphate (S1P). S1P is a bioactive lysophospholipid that elicits diverse physiological effects on most types of cells and tissues. Receptor for the chemokine-like protein FAM19A5. Mediates the inhibitory effect of FAM19A5 on vascular smooth muscle cell proliferation and migration. In lymphoid follicles, couples the binding of S1P to the activation of GNA13 and downstream inhibition of AKT activation leading to suppression of germinal center (GC) B cell growth and migration outside the GC niche. This Mus musculus (Mouse) protein is Sphingosine 1-phosphate receptor 2 (S1pr2).